The following is a 318-amino-acid chain: Ribosomal RNA small subunit methyltransferase H (318 aa).

Residues 35–37 (AGH), Asp-55, Phe-84, Asp-105, and Gln-112 contribute to the S-adenosyl-L-methionine site. Residues 294-318 (SDSELSENNRSRSAKLRIAEKIKSR) form a disordered region.

It belongs to the methyltransferase superfamily. RsmH family.

It localises to the cytoplasm. The catalysed reaction is cytidine(1402) in 16S rRNA + S-adenosyl-L-methionine = N(4)-methylcytidine(1402) in 16S rRNA + S-adenosyl-L-homocysteine + H(+). Functionally, specifically methylates the N4 position of cytidine in position 1402 (C1402) of 16S rRNA. The sequence is that of Ribosomal RNA small subunit methyltransferase H from Enterococcus faecalis (strain ATCC 700802 / V583).